We begin with the raw amino-acid sequence, 350 residues long: Spermidine/putrescine import ATP-binding protein PotA (350 aa).

Residues 6 to 236 enclose the ABC transporter domain; that stretch reads LELRNISKQY…PENLWTAQFI (231 aa). ATP is bound at residue 38 to 45; it reads GPSGCGKT.

It belongs to the ABC transporter superfamily. Spermidine/putrescine importer (TC 3.A.1.11.1) family. As to quaternary structure, the complex is composed of two ATP-binding proteins (PotA), two transmembrane proteins (PotB and PotC) and a solute-binding protein (PotD).

The protein localises to the cell membrane. The enzyme catalyses ATP + H2O + polyamine-[polyamine-binding protein]Side 1 = ADP + phosphate + polyamineSide 2 + [polyamine-binding protein]Side 1.. Part of the ABC transporter complex PotABCD involved in spermidine/putrescine import. Responsible for energy coupling to the transport system. The chain is Spermidine/putrescine import ATP-binding protein PotA from Spiroplasma citri.